Reading from the N-terminus, the 498-residue chain is ATP synthase subunit beta, chloroplastic (498 aa).

172 to 179 provides a ligand contact to ATP; that stretch reads GGAGVGKT.

This sequence belongs to the ATPase alpha/beta chains family. F-type ATPases have 2 components, CF(1) - the catalytic core - and CF(0) - the membrane proton channel. CF(1) has five subunits: alpha(3), beta(3), gamma(1), delta(1), epsilon(1). CF(0) has four main subunits: a(1), b(1), b'(1) and c(9-12).

The protein resides in the plastid. It is found in the chloroplast thylakoid membrane. It catalyses the reaction ATP + H2O + 4 H(+)(in) = ADP + phosphate + 5 H(+)(out). Its function is as follows. Produces ATP from ADP in the presence of a proton gradient across the membrane. The catalytic sites are hosted primarily by the beta subunits. The chain is ATP synthase subunit beta, chloroplastic from Coffea arabica (Arabian coffee).